A 221-amino-acid polypeptide reads, in one-letter code: UPF0319 protein CGSHiEE_03630 (221 aa).

The N-terminal stretch at 1–21 is a signal peptide; the sequence is MKLRAVVLGLATLCTSTATFA.

Belongs to the UPF0319 family.

In Haemophilus influenzae (strain PittEE), this protein is UPF0319 protein CGSHiEE_03630.